We begin with the raw amino-acid sequence, 191 residues long: dTTP/UTP pyrophosphatase (191 aa).

Catalysis depends on D65, which acts as the Proton acceptor.

This sequence belongs to the Maf family. YhdE subfamily. The cofactor is a divalent metal cation.

The protein localises to the cytoplasm. The catalysed reaction is dTTP + H2O = dTMP + diphosphate + H(+). The enzyme catalyses UTP + H2O = UMP + diphosphate + H(+). Functionally, nucleoside triphosphate pyrophosphatase that hydrolyzes dTTP and UTP. May have a dual role in cell division arrest and in preventing the incorporation of modified nucleotides into cellular nucleic acids. The sequence is that of dTTP/UTP pyrophosphatase from Leptospira biflexa serovar Patoc (strain Patoc 1 / Ames).